The following is a 243-amino-acid chain: tRNA1(Val) (adenine(37)-N6)-methyltransferase (243 aa).

Belongs to the methyltransferase superfamily. tRNA (adenine-N(6)-)-methyltransferase family.

It localises to the cytoplasm. It carries out the reaction adenosine(37) in tRNA1(Val) + S-adenosyl-L-methionine = N(6)-methyladenosine(37) in tRNA1(Val) + S-adenosyl-L-homocysteine + H(+). In terms of biological role, specifically methylates the adenine in position 37 of tRNA(1)(Val) (anticodon cmo5UAC). In Shewanella loihica (strain ATCC BAA-1088 / PV-4), this protein is tRNA1(Val) (adenine(37)-N6)-methyltransferase.